The chain runs to 428 residues: Gamma-glutamyl phosphate reductase (428 aa).

Belongs to the gamma-glutamyl phosphate reductase family.

It localises to the cytoplasm. It carries out the reaction L-glutamate 5-semialdehyde + phosphate + NADP(+) = L-glutamyl 5-phosphate + NADPH + H(+). Its pathway is amino-acid biosynthesis; L-proline biosynthesis; L-glutamate 5-semialdehyde from L-glutamate: step 2/2. Catalyzes the NADPH-dependent reduction of L-glutamate 5-phosphate into L-glutamate 5-semialdehyde and phosphate. The product spontaneously undergoes cyclization to form 1-pyrroline-5-carboxylate. The chain is Gamma-glutamyl phosphate reductase from Afipia carboxidovorans (strain ATCC 49405 / DSM 1227 / KCTC 32145 / OM5) (Oligotropha carboxidovorans).